We begin with the raw amino-acid sequence, 847 residues long: Leucine--tRNA ligase (847 aa).

The 'HIGH' region signature appears at 41–51 (PYPSGRIHMGH). Residues 619-623 (KMSKS) carry the 'KMSKS' region motif. Lysine 622 provides a ligand contact to ATP.

Belongs to the class-I aminoacyl-tRNA synthetase family.

The protein resides in the cytoplasm. The enzyme catalyses tRNA(Leu) + L-leucine + ATP = L-leucyl-tRNA(Leu) + AMP + diphosphate. The protein is Leucine--tRNA ligase of Cereibacter sphaeroides (strain ATCC 17029 / ATH 2.4.9) (Rhodobacter sphaeroides).